The primary structure comprises 219 residues: Large ribosomal subunit protein bL31m (219 aa).

2 stretches are compositionally biased toward basic and acidic residues: residues 169-181 (KKEEEEAAKKAAE) and 210-219 (KETRHYGKKK). 2 disordered regions span residues 169 to 188 (KKEEEEAAKKAAEAEEADPF) and 200 to 219 (TENMNPGLNFKETRHYGKKK).

It belongs to the bacterial ribosomal protein bL31 family. Highly divergent. In terms of assembly, component of the mitochondrial large ribosomal subunit (mt-LSU). Mature N.crassa 74S mitochondrial ribosomes consist of a small (37S) and a large (54S) subunit. The 37S small subunit contains a 16S ribosomal RNA (16S mt-rRNA) and 32 different proteins. The 54S large subunit contains a 23S rRNA (23S mt-rRNA) and 42 different proteins. bL31m bridges the mt-LSU central protuberance and the mt-SSU head.

It is found in the mitochondrion. Functionally, component of the mitochondrial ribosome (mitoribosome), a dedicated translation machinery responsible for the synthesis of mitochondrial genome-encoded proteins, including at least some of the essential transmembrane subunits of the mitochondrial respiratory chain. The mitoribosomes are attached to the mitochondrial inner membrane and translation products are cotranslationally integrated into the membrane. The sequence is that of Large ribosomal subunit protein bL31m (mrpl36) from Neurospora crassa (strain ATCC 24698 / 74-OR23-1A / CBS 708.71 / DSM 1257 / FGSC 987).